A 360-amino-acid polypeptide reads, in one-letter code: Photosystem II protein D1 (360 aa).

3 helical membrane-spanning segments follow: residues 30 to 47, 119 to 134, and 143 to 157; these read YVGW…AAAA, HFLI…QWEL, and WICV…AAFA. A chlorophyll a-binding site is contributed by His119. Tyr127 contributes to the pheophytin a binding site. Residues Asp171 and Glu190 each coordinate [CaMn4O5] cluster. A helical transmembrane segment spans residues 198–219; sequence FHMAGVAGMFGGSLFSAMHGSL. A chlorophyll a-binding site is contributed by His199. Residues His216 and 265–266 contribute to the a quinone site; that span reads SF. Residue His216 participates in Fe cation binding. His273 serves as a coordination point for Fe cation. A helical transmembrane segment spans residues 275-289; it reads FLAVFPVVCVWLTSM. Residues His333, Glu334, Asp343, and Ala345 each contribute to the [CaMn4O5] cluster site. Positions 346 to 360 are excised as a propeptide; sequence AAESTTVALTAPAIG.

The protein belongs to the reaction center PufL/M/PsbA/D family. In terms of assembly, PSII is composed of 1 copy each of membrane proteins PsbA, PsbB, PsbC, PsbD, PsbE, PsbF, PsbH, PsbI, PsbJ, PsbK, PsbL, PsbM, PsbT, PsbX, PsbY, Psb30/Ycf12, peripheral proteins PsbO, CyanoQ (PsbQ), PsbU, PsbV and a large number of cofactors. It forms dimeric complexes. It depends on The D1/D2 heterodimer binds P680, chlorophylls that are the primary electron donor of PSII, and subsequent electron acceptors. It shares a non-heme iron and each subunit binds pheophytin, quinone, additional chlorophylls, carotenoids and lipids. D1 provides most of the ligands for the Mn4-Ca-O5 cluster of the oxygen-evolving complex (OEC). There is also a Cl(-1) ion associated with D1 and D2, which is required for oxygen evolution. The PSII complex binds additional chlorophylls, carotenoids and specific lipids. as a cofactor. In terms of processing, tyr-162 forms a radical intermediate that is referred to as redox-active TyrZ, YZ or Y-Z. C-terminally processed by CtpA; processing is essential to allow assembly of the oxygen-evolving complex and thus photosynthetic growth.

The protein localises to the cellular thylakoid membrane. It catalyses the reaction 2 a plastoquinone + 4 hnu + 2 H2O = 2 a plastoquinol + O2. Photosystem II (PSII) is a light-driven water:plastoquinone oxidoreductase that uses light energy to abstract electrons from H(2)O, generating O(2) and a proton gradient subsequently used for ATP formation. It consists of a core antenna complex that captures photons, and an electron transfer chain that converts photonic excitation into a charge separation. The D1/D2 (PsbA/PsbD) reaction center heterodimer binds P680, the primary electron donor of PSII as well as several subsequent electron acceptors. This Prochlorococcus marinus (strain MIT 9515) protein is Photosystem II protein D1.